The primary structure comprises 449 residues: MFEEKLSTDNNIRRIFIETYGCQMNIADSEIVIAIVQMDGFEYTENILEADVVLINTCSVRENAEKKIFSRLQYFQSLKKKRNQLIIGVLGCMAKRIRETLIQQYHVDLVVGPDSYMDLPHLIGTVEKGAKAININLSSTEVYKGIVPLKLSRIKISGFISIIRGCNNFCSYCIVPYTRGRERSRDPKSILNELHILKEQGYKEVILLGQNVNSYFYKNENITDFPHLLELVALNAPEMRIRFTTSHPKDMGDETLRVIAKYNNICKHIHLPIQSGSSKILRAMNRKYTREWYLQRVTSIRKIVPEVSISTDLFCGFPSETEEDHKKTLSLMKEVGFDSAFMFKYSERPETYASRYLPDNVPEEVKIRRLNEIITLQLKISLMKNKENIGKTMEILIEGFSKRSREQLFGRTLQNKIVLFPRKNYHIGEKVLVEIKKASAATLFGDPKL.

In terms of domain architecture, MTTase N-terminal spans 13–128; the sequence is RRIFIETYGC…LPHLIGTVEK (116 aa). Cysteine 22, cysteine 58, cysteine 92, cysteine 166, cysteine 170, and cysteine 173 together coordinate [4Fe-4S] cluster. Residues 152 to 383 enclose the Radical SAM core domain; that stretch reads SRIKISGFIS…ITLQLKISLM (232 aa). The 64-residue stretch at 386–449 folds into the TRAM domain; it reads KENIGKTMEI…AATLFGDPKL (64 aa).

It belongs to the methylthiotransferase family. MiaB subfamily. In terms of assembly, monomer. [4Fe-4S] cluster is required as a cofactor.

It is found in the cytoplasm. The enzyme catalyses N(6)-dimethylallyladenosine(37) in tRNA + (sulfur carrier)-SH + AH2 + 2 S-adenosyl-L-methionine = 2-methylsulfanyl-N(6)-dimethylallyladenosine(37) in tRNA + (sulfur carrier)-H + 5'-deoxyadenosine + L-methionine + A + S-adenosyl-L-homocysteine + 2 H(+). Functionally, catalyzes the methylthiolation of N6-(dimethylallyl)adenosine (i(6)A), leading to the formation of 2-methylthio-N6-(dimethylallyl)adenosine (ms(2)i(6)A) at position 37 in tRNAs that read codons beginning with uridine. This chain is tRNA-2-methylthio-N(6)-dimethylallyladenosine synthase, found in Azobacteroides pseudotrichonymphae genomovar. CFP2.